The chain runs to 447 residues: Na(+)-translocating NADH-quinone reductase subunit A (447 aa).

It belongs to the NqrA family. Composed of six subunits; NqrA, NqrB, NqrC, NqrD, NqrE and NqrF.

The enzyme catalyses a ubiquinone + n Na(+)(in) + NADH + H(+) = a ubiquinol + n Na(+)(out) + NAD(+). Its function is as follows. NQR complex catalyzes the reduction of ubiquinone-1 to ubiquinol by two successive reactions, coupled with the transport of Na(+) ions from the cytoplasm to the periplasm. NqrA to NqrE are probably involved in the second step, the conversion of ubisemiquinone to ubiquinol. The protein is Na(+)-translocating NADH-quinone reductase subunit A of Neisseria gonorrhoeae (strain ATCC 700825 / FA 1090).